The primary structure comprises 258 residues: uncharacterized protein (258 aa).

Residues isoleucine 17, aspartate 53, asparagine 80, arginine 113, tyrosine 145, lysine 149, isoleucine 178, and serine 180 each coordinate NADP(+). Tyrosine 145 serves as the catalytic Proton donor. The Lowers pKa of active site Tyr role is filled by lysine 149.

This sequence belongs to the short-chain dehydrogenases/reductases (SDR) family.

Its subcellular location is the cytoplasm. The protein localises to the nucleus. This is an uncharacterized protein from Schizosaccharomyces pombe (strain 972 / ATCC 24843) (Fission yeast).